The following is a 300-amino-acid chain: MNTLVLKIDAILSKHLKKQLAPYTISSQNTYVAFAAKKNGVTVLLYKSGKLVLQGNGANALAQELNLPVAKTVFEASNNSQDIPIIGSDEVGNGSYFGGIAVVASFVDPKDHSFLKKLGVDDSKKLSDKTIQQIAPLLEKQIPHQSLLLSPKKYNELVGKSKPYNAISIKVALHNQAIFLLLQKGIQPKQIVIDAFTSQSNYEKHLKKEKNHFPDPLTFQEKAESHYLAVAVSSIIARNLFLDNLDQLGQDLGYQLPSGAGSASDKVASQLLAAYGMSSLEYSAKLHFANTHKAQALLTK.

The RNase H type-2 domain maps to 83 to 300 (IPIIGSDEVG…THKAQALLTK (218 aa)). 3 residues coordinate a divalent metal cation: aspartate 89, glutamate 90, and aspartate 194.

Belongs to the RNase HII family. RnhC subfamily. Mn(2+) serves as cofactor. Requires Mg(2+) as cofactor.

Its subcellular location is the cytoplasm. The enzyme catalyses Endonucleolytic cleavage to 5'-phosphomonoester.. Its function is as follows. Endonuclease that specifically degrades the RNA of RNA-DNA hybrids. This chain is Ribonuclease HIII, found in Streptococcus pyogenes serotype M3 (strain ATCC BAA-595 / MGAS315).